The following is a 678-amino-acid chain: Catalase (678 aa).

Residues methionine 1–lysine 26 are compositionally biased toward basic and acidic residues. Residues methionine 1–glycine 32 form a disordered region. Active-site residues include histidine 75 and asparagine 148. Tyrosine 362 contributes to the heme binding site.

It belongs to the catalase family. HPII subfamily. Requires heme as cofactor.

The protein resides in the cytoplasm. The enzyme catalyses 2 H2O2 = O2 + 2 H2O. In terms of biological role, decomposes hydrogen peroxide into water and oxygen; serves to protect cells from the toxic effects of hydrogen peroxide. This Alkalihalophilus pseudofirmus (strain ATCC BAA-2126 / JCM 17055 / OF4) (Bacillus pseudofirmus) protein is Catalase (katE).